The chain runs to 828 residues: Periplasmic nitrate reductase (828 aa).

A signal peptide (tat-type signal) is located at residues 1–31; the sequence is MKLSRRSFMKANAVAAAAAAAGLSVPGVARA. Positions 39 to 95 constitute a 4Fe-4S Mo/W bis-MGD-type domain; the sequence is IKWDKAPCRFCGTGCGVLVGTQQGRVVACQGDPDAPVNRGLNCIKGYFLPKIMYGKD. Cys46, Cys49, Cys53, and Cys81 together coordinate [4Fe-4S] cluster. Mo-bis(molybdopterin guanine dinucleotide) is bound by residues Lys83, Gln150, Asn175, Cys179, 212 to 219, 243 to 247, 262 to 264, Met372, Gln376, Asn482, 508 to 509, Lys531, Asp558, and 718 to 727; these read WGSNMAEM, STYQH, QSD, SD, and TGRVLEHWHT. Phe794 contributes to the substrate binding site. Residues Asn802 and Lys819 each contribute to the Mo-bis(molybdopterin guanine dinucleotide) site.

This sequence belongs to the prokaryotic molybdopterin-containing oxidoreductase family. NasA/NapA/NarB subfamily. As to quaternary structure, component of the periplasmic nitrate reductase NapAB complex composed of NapA and NapB. It depends on [4Fe-4S] cluster as a cofactor. The cofactor is Mo-bis(molybdopterin guanine dinucleotide). In terms of processing, predicted to be exported by the Tat system. The position of the signal peptide cleavage has not been experimentally proven.

The protein resides in the periplasm. It catalyses the reaction 2 Fe(II)-[cytochrome] + nitrate + 2 H(+) = 2 Fe(III)-[cytochrome] + nitrite + H2O. In terms of biological role, catalytic subunit of the periplasmic nitrate reductase complex NapAB. Receives electrons from NapB and catalyzes the reduction of nitrate to nitrite. This Escherichia coli O1:K1 / APEC protein is Periplasmic nitrate reductase.